Consider the following 260-residue polypeptide: Apolipoprotein A-I (260 aa).

Residues 1–18 (MKFAALALALLLAVGSHA) form the signal peptide. The segment at 32-63 (ARAVLDVYLTQVKDMSLRAVNQLDDPQYAEFK) is 3 X approximate tandem repeats. 2 tandem repeats follow at residues 64–85 (TNLAQRIEEMYTQIKTLQGSVS) and 87–107 (MTDSFYNTVMEVTKDTRESLN). Residues 64 to 260 (TNLAQRIEEM…EIIAASVTKS (197 aa)) form a 10 X approximate tandem repeats region. One copy of the 3; half-length repeat lies at 108 to 118 (VDLEALKSSLA). Tandem repeats lie at residues 119–140 (PQNEQLKQVIEKHLNDYRTLLT), 141–162 (PIYNDYKTKHDEEMAALKTRLE), 163–184 (PVMEELRTKIQANVEETKAVLM), 185–206 (PMVETVRTKVTERLESLREVVQ), and 207–225 (PYVQEYKEQMKQMYDQAQT). A 9; half-length repeat occupies 226–236 (VDTDALRTKIT). Residues 237-260 (PLVEEIKVKMNAIFEIIAASVTKS) form repeat 10.

It belongs to the apolipoprotein A1/A4/E family. Strong expression in liver with lower expression in intestine.

It localises to the secreted. Functionally, participates in the reverse transport of cholesterol from tissues to the liver for excretion by promoting cholesterol efflux from tissues and by acting as a cofactor for the lecithin cholesterol acyltransferase (LCAT). The sequence is that of Apolipoprotein A-I (apoa1) from Sparus aurata (Gilthead sea bream).